A 793-amino-acid chain; its full sequence is Lon protease 1 (793 aa).

The region spanning 8 to 202 (VPVIPLKNSV…KLLDRLQELK (195 aa)) is the Lon N-terminal domain. Residue 354 to 361 (GPPGVGKT) participates in ATP binding. Residues 590–770 (LLPPGVVTGL…NEVLKITLGV (181 aa)) enclose the Lon proteolytic domain. Residues S676 and K719 contribute to the active site.

The protein belongs to the peptidase S16 family. As to quaternary structure, homohexamer. Organized in a ring with a central cavity.

It is found in the cytoplasm. The catalysed reaction is Hydrolysis of proteins in presence of ATP.. ATP-dependent serine protease that mediates the selective degradation of mutant and abnormal proteins as well as certain short-lived regulatory proteins. Required for cellular homeostasis and for survival from DNA damage and developmental changes induced by stress. Degrades polypeptides processively to yield small peptide fragments that are 5 to 10 amino acids long. Binds to DNA in a double-stranded, site-specific manner. In Bdellovibrio bacteriovorus (strain ATCC 15356 / DSM 50701 / NCIMB 9529 / HD100), this protein is Lon protease 1.